Consider the following 344-residue polypeptide: Meiotically up-regulated gene 10 protein (344 aa).

In terms of domain architecture, DH spans 48–207 (EFNSILQEII…RELCSYIDQE (160 aa)).

The protein resides in the cytoplasm. It localises to the nucleus. In terms of biological role, has a role in meiosis. The protein is Meiotically up-regulated gene 10 protein (mug10) of Schizosaccharomyces pombe (strain 972 / ATCC 24843) (Fission yeast).